The following is a 1036-amino-acid chain: Multiple C2 domain and transmembrane region protein 2 (1036 aa).

The C2 1 domain occupies 1 to 110 (MRNTTKLVVH…YKDDQVYQRF (110 aa)). Disordered stretches follow at residues 137–204 (DQTF…PVQK) and 225–246 (RENPHEAQKPMSRGANQLHPQN). Over residues 146-155 (PYTSPTQASA) the composition is skewed to polar residues. The span at 158-168 (TEEDTADSETE) shows a compositional bias: acidic residues. A compositionally biased stretch (basic and acidic residues) spans 190–204 (VEGKKSEEVKEPVQK). C2 domains follow at residues 277–399 (PNAG…PQWY), 440–563 (VHGE…SRWF), and 607–734 (YISD…THSF). Residues Asp316, Asp364, Glu366, and Asp372 each coordinate Ca(2+). 2 helical membrane-spanning segments follow: residues 871-891 (FILVMYPELILPTMFLYMFFI) and 979-999 (LFILFCLAASVVLYAMPFKAI).

Belongs to the MCTP family. Ca(2+) serves as cofactor. As to expression, expressed in the vascular tissues of roots and rosette leaves. Accumulates in roots meristems. Observed in flowers.

It is found in the cell membrane. May function as a signaling molecule by regulating the trafficking of other regulators. The sequence is that of Multiple C2 domain and transmembrane region protein 2 from Arabidopsis thaliana (Mouse-ear cress).